Here is a 343-residue protein sequence, read N- to C-terminus: MSNYQFTKPAGPFRLSELAKISGATLYEGKGETFTVSGLAKLSEATSNDLVMLHQKKYVKELKNTAARSCIIGPDYVKFAPDSMYLLVHPNPYKAFALIAQAFYPSEKSSSFIAPSAKIESTALIGSDCSIAHGAYVGNHARIGKRCKIGVNTYIGDGVTIGDNCIIEDNVSIRHAVIGSNVVVYPGARIGQDGFGFASDAEGHYKIPHAGGVIIGNDVEIGANTCIDRGSLGNTVIEDWCRLDNLVQIGHNVKIGKGSIIVAQVGIAGSTELGEHVTLAGQVGVIGHLKIGKGATVLTCSKVLRNVQPGDRVIGYPAISISDWQKQIRFLKTAIKSKNPLKS.

Residue His-251 is the Proton acceptor of the active site.

It belongs to the transferase hexapeptide repeat family. LpxD subfamily. In terms of assembly, homotrimer.

It carries out the reaction a UDP-3-O-[(3R)-3-hydroxyacyl]-alpha-D-glucosamine + a (3R)-hydroxyacyl-[ACP] = a UDP-2-N,3-O-bis[(3R)-3-hydroxyacyl]-alpha-D-glucosamine + holo-[ACP] + H(+). Its pathway is bacterial outer membrane biogenesis; LPS lipid A biosynthesis. Its function is as follows. Catalyzes the N-acylation of UDP-3-O-acylglucosamine using 3-hydroxyacyl-ACP as the acyl donor. Is involved in the biosynthesis of lipid A, a phosphorylated glycolipid that anchors the lipopolysaccharide to the outer membrane of the cell. This Legionella pneumophila (strain Paris) protein is UDP-3-O-acylglucosamine N-acyltransferase 2.